Here is a 465-residue protein sequence, read N- to C-terminus: FAD-dependent monooxygenase penM (465 aa).

The helical transmembrane segment at 5-25 threads the bilayer; the sequence is QFHVIIVGGSIAGLTLAHCLH. 5 residues coordinate FAD: Glu35, Gly49, Arg108, Asp299, and Ala312. A helical membrane pass occupies residues 435–455; sequence VLVLLLSALTWSCLGNMNIIM.

This sequence belongs to the paxM FAD-dependent monooxygenase family. The cofactor is FAD.

The protein resides in the membrane. It functions in the pathway secondary metabolite biosynthesis. FAD-dependent monooxygenase; part of the gene cluster that mediates the biosynthesis of the indole diterpenes penitrems. The geranylgeranyl diphosphate (GGPP) synthase penG catalyzes the first step in penitrem biosynthesis via conversion of farnesyl pyrophosphate and isopentyl pyrophosphate into geranylgeranyl pyrophosphate (GGPP). Condensation of indole-3-glycerol phosphate with GGPP by the prenyl transferase penC then forms 3-geranylgeranylindole (3-GGI). Epoxidation by the FAD-dependent monooxygenase penM leads to a epoxidized-GGI that is substrate of the terpene cyclase penB for cyclization to yield paspaline. Paspaline is subsequently converted to 13-desoxypaxilline by the cytochrome P450 monooxygenase penP, the latter being then converted to paxilline by the cytochrome P450 monooxygenase penQ. Paxilline is converted to beta-paxitriol via C-10 ketoreduction by the short-chain dehydrogenase PC-15 which can be monoprenylated at the C-20 by the indole diterpene prenyltransferase penD. A two-step elimination (acetylation and elimination) process performed by the O-acetyltransferase PC-16 and the P.simplicissimum ptmI-ortholog not yet identified in P.crustosum, leads to the production of the prenylated form of penijanthine. The FAD-linked oxidoreductase ptmO then converts the prenylated form of penijanthine into PC-M5 which is in turn transformed into PC-M4 by the aromatic dimethylallyltransferase PC-22. A series of oxidation steps involving 4 cytochrome P450 monooxygenases (PC-21, PC-05, PC-23, PC-20) and a FAD-dependent monooxygenase (PC-14) are required for the transformation of PC-M4 to penitrems A and E. Synthesis of these final products is proposed to proceed via penitrems D and C (PC-21, PC-05, PC-14) and penitrems B and F (PC-21, PC-05, PC-14, PC-23). This Penicillium crustosum (Blue mold fungus) protein is FAD-dependent monooxygenase penM.